A 305-amino-acid polypeptide reads, in one-letter code: Calponin-2 (305 aa).

At S2 the chain carries N-acetylserine. An N6-acetyllysine mark is found at K8 and K25. In terms of domain architecture, Calponin-homology (CH) spans 28–132; it reads PQKEAELRSW…SLLALAGKAK (105 aa). Position 138 is a phosphoserine (S138). Calponin-like repeat units lie at residues 166-191, 206-231, and 245-269; these read IGLQ…RHLY, ISLQ…RHIY, and MSLQ…RQIY.

Belongs to the calponin family. Smooth muscle, and tissues containing significant amounts of smooth muscle.

Thin filament-associated protein that is implicated in the regulation and modulation of smooth muscle contraction. It is capable of binding to actin, calmodulin and tropomyosin. The interaction of calponin with actin inhibits the actomyosin Mg-ATPase activity. The chain is Calponin-2 (Cnn2) from Mus musculus (Mouse).